Consider the following 305-residue polypeptide: UDP-3-O-acyl-N-acetylglucosamine deacetylase (305 aa).

Zn(2+) is bound by residues H77, H234, and D238. H261 acts as the Proton donor in catalysis.

Belongs to the LpxC family. Requires Zn(2+) as cofactor.

It catalyses the reaction a UDP-3-O-[(3R)-3-hydroxyacyl]-N-acetyl-alpha-D-glucosamine + H2O = a UDP-3-O-[(3R)-3-hydroxyacyl]-alpha-D-glucosamine + acetate. It functions in the pathway glycolipid biosynthesis; lipid IV(A) biosynthesis; lipid IV(A) from (3R)-3-hydroxytetradecanoyl-[acyl-carrier-protein] and UDP-N-acetyl-alpha-D-glucosamine: step 2/6. Functionally, catalyzes the hydrolysis of UDP-3-O-myristoyl-N-acetylglucosamine to form UDP-3-O-myristoylglucosamine and acetate, the committed step in lipid A biosynthesis. The protein is UDP-3-O-acyl-N-acetylglucosamine deacetylase of Oleidesulfovibrio alaskensis (strain ATCC BAA-1058 / DSM 17464 / G20) (Desulfovibrio alaskensis).